Here is a 247-residue protein sequence, read N- to C-terminus: Ribose-5-phosphate isomerase (247 aa).

Belongs to the ribose 5-phosphate isomerase family.

Its subcellular location is the cytoplasm. The enzyme catalyses aldehydo-D-ribose 5-phosphate = D-ribulose 5-phosphate. It participates in carbohydrate degradation; pentose phosphate pathway; D-ribose 5-phosphate from D-ribulose 5-phosphate (non-oxidative stage): step 1/1. This Meyerozyma guilliermondii (strain ATCC 6260 / CBS 566 / DSM 6381 / JCM 1539 / NBRC 10279 / NRRL Y-324) (Yeast) protein is Ribose-5-phosphate isomerase (RKI1).